We begin with the raw amino-acid sequence, 156 residues long: ATP synthase subunit b (156 aa).

The helical transmembrane segment at 7–27 (LIGQLIAFAIFVWFCMKYVWP) threads the bilayer.

This sequence belongs to the ATPase B chain family. As to quaternary structure, F-type ATPases have 2 components, F(1) - the catalytic core - and F(0) - the membrane proton channel. F(1) has five subunits: alpha(3), beta(3), gamma(1), delta(1), epsilon(1). F(0) has three main subunits: a(1), b(2) and c(10-14). The alpha and beta chains form an alternating ring which encloses part of the gamma chain. F(1) is attached to F(0) by a central stalk formed by the gamma and epsilon chains, while a peripheral stalk is formed by the delta and b chains.

It is found in the cell inner membrane. In terms of biological role, f(1)F(0) ATP synthase produces ATP from ADP in the presence of a proton or sodium gradient. F-type ATPases consist of two structural domains, F(1) containing the extramembraneous catalytic core and F(0) containing the membrane proton channel, linked together by a central stalk and a peripheral stalk. During catalysis, ATP synthesis in the catalytic domain of F(1) is coupled via a rotary mechanism of the central stalk subunits to proton translocation. Component of the F(0) channel, it forms part of the peripheral stalk, linking F(1) to F(0). In Histophilus somni (strain 129Pt) (Haemophilus somnus), this protein is ATP synthase subunit b.